The following is a 1354-amino-acid chain: Rho-associated protein kinase 1 (1354 aa).

Position 2 is an N-acetylserine (serine 2). The region spanning 76–338 is the Protein kinase domain; sequence YEVVKVIGRG…VEEIKRHLFF (263 aa). Residues 82-90 and lysine 105 contribute to the ATP site; that span reads IGRGAFGEV. The active-site Proton acceptor is aspartate 198. Positions 341 to 409 constitute an AGC-kinase C-terminal domain; it reads DQWAWETLRD…YSNRRYLSPA (69 aa). The interaction with FHOD1 stretch occupies residues 368 to 727; the sequence is FDDLEEDKGD…KKLKEEREAR (360 aa). The stretch at 422–692 forms a coiled coil; the sequence is KSLQENLQKT…RLEQEVNEHK (271 aa). Residues 479–556 enclose the REM-1 domain; that stretch reads STVSQIEKEK…LEEANDLLRT (78 aa). The interval 707–946 is SHROOM3 binding; that stretch reads EAKSVAMCEM…AVSRLEETNS (240 aa). The 67-residue stretch at 949 to 1015 folds into the RhoBD domain; sequence TKDIELLRKE…LAEIMNRKDF (67 aa). Positions 998-1010 are RHOA binding; sequence LKTQAVNKLAEIM. A coiled-coil region spans residues 1011–1102; that stretch reads NRKDFKIDKK…KLSDLSDSTS (92 aa). A disordered region spans residues 1101 to 1120; the sequence is TSVASFPSADETDPNLPESR. Phosphoserine occurs at positions 1105 and 1108. The auto-inhibitory stretch occupies residues 1115-1354; sequence NLPESRIEGW…VVKNTSGKTS (240 aa). The region spanning 1118–1317 is the PH domain; sequence ESRIEGWLSV…WVTHLVKKIP (200 aa). The segment at 1228–1283 adopts a Phorbol-ester/DAG-type zinc-finger fold; sequence GHEFIPTLYHFPANCEACAKPLWHVFKPPPALECRRCHVKCHRDHLDKKEDLISPC. A Phosphoserine modification is found at serine 1328. The segment at 1333 to 1354 is disordered; that stretch reads STRSTANQSFRKVVKNTSGKTS.

The protein belongs to the protein kinase superfamily. AGC Ser/Thr protein kinase family. In terms of assembly, homodimer. Interacts with RHOA (activated by GTP), RHOB, RHOC, GEM, MYLC2B, RHOE, PPP1R12A, LIMK1, LIMK2, TSG101, CHORDC1, DAPK3, PFN1, PTEN and JIP3. Interacts with FHOD1 in a Src-dependent manner. Interacts with ITGB1BP1 (via N-terminus and PTB domain). Interacts with SHROOM3. Requires Mg(2+) as cofactor. Post-translationally, autophosphorylated on serine and threonine residues. In terms of processing, cleaved by caspase-3 during apoptosis. This leads to constitutive activation of the kinase and membrane blebbing. Detected in corneal epithelium.

The protein resides in the cytoplasm. Its subcellular location is the cytoskeleton. It is found in the microtubule organizing center. It localises to the centrosome. The protein localises to the centriole. The protein resides in the golgi apparatus membrane. Its subcellular location is the cell projection. It is found in the bleb. It localises to the cell membrane. The protein localises to the lamellipodium. The protein resides in the ruffle. The catalysed reaction is L-seryl-[protein] + ATP = O-phospho-L-seryl-[protein] + ADP + H(+). It catalyses the reaction L-threonyl-[protein] + ATP = O-phospho-L-threonyl-[protein] + ADP + H(+). Activated by RHOA binding. Inhibited by Y-27632. Protein kinase which is a key regulator of the actin cytoskeleton and cell polarity. Involved in regulation of smooth muscle contraction, actin cytoskeleton organization, stress fiber and focal adhesion formation, neurite retraction, cell adhesion and motility via phosphorylation of DAPK3, GFAP, LIMK1, LIMK2, MYL9/MLC2, TPPP, PFN1 and PPP1R12A. Phosphorylates FHOD1 and acts synergistically with it to promote SRC-dependent non-apoptotic plasma membrane blebbing. Phosphorylates JIP3 and regulates the recruitment of JNK to JIP3 upon UVB-induced stress. Acts as a suppressor of inflammatory cell migration by regulating PTEN phosphorylation and stability. Acts as a negative regulator of VEGF-induced angiogenic endothelial cell activation. Required for centrosome positioning and centrosome-dependent exit from mitosis. Plays a role in terminal erythroid differentiation. Inhibits podocyte motility via regulation of actin cytoskeletal dynamics and phosphorylation of CFL1. Promotes keratinocyte terminal differentiation. Involved in osteoblast compaction through the fibronectin fibrillogenesis cell-mediated matrix assembly process, essential for osteoblast mineralization. May regulate closure of the eyelids and ventral body wall by inducing the assembly of actomyosin bundles. This chain is Rho-associated protein kinase 1 (ROCK1), found in Oryctolagus cuniculus (Rabbit).